A 140-amino-acid chain; its full sequence is Small ribosomal subunit protein uS12 (140 aa).

Residues 33 to 55 (KEQTNVSSPQKRGVCTRVGTMTP) form a disordered region. Residue D102 is modified to 3-methylthioaspartic acid.

The protein belongs to the universal ribosomal protein uS12 family. Part of the 30S ribosomal subunit. Contacts proteins S8 and S17. May interact with IF1 in the 30S initiation complex.

Its function is as follows. With S4 and S5 plays an important role in translational accuracy. Functionally, interacts with and stabilizes bases of the 16S rRNA that are involved in tRNA selection in the A site and with the mRNA backbone. Located at the interface of the 30S and 50S subunits, it traverses the body of the 30S subunit contacting proteins on the other side and probably holding the rRNA structure together. The combined cluster of proteins S8, S12 and S17 appears to hold together the shoulder and platform of the 30S subunit. This is Small ribosomal subunit protein uS12 from Geobacillus thermodenitrificans (strain NG80-2).